Consider the following 451-residue polypeptide: Glycine--tRNA ligase (451 aa).

Substrate-binding residues include arginine 101 and glutamate 151. Residues arginine 183–glutamate 185, phenylalanine 193–phenylalanine 198, glutamate 267–leucine 268, and glycine 312–arginine 315 each bind ATP. Residue phenylalanine 198–glutamate 202 coordinates substrate. Glutamate 308–glycine 312 provides a ligand contact to substrate.

The protein belongs to the class-II aminoacyl-tRNA synthetase family. In terms of assembly, homodimer.

It localises to the cytoplasm. It carries out the reaction tRNA(Gly) + glycine + ATP = glycyl-tRNA(Gly) + AMP + diphosphate. In terms of biological role, catalyzes the attachment of glycine to tRNA(Gly). The polypeptide is Glycine--tRNA ligase (Treponema denticola (strain ATCC 35405 / DSM 14222 / CIP 103919 / JCM 8153 / KCTC 15104)).